Here is a 164-residue protein sequence, read N- to C-terminus: uncharacterized protein (164 aa).

Residues 46–142 form a disordered region; that stretch reads GRSPEQKEHV…APDNSIYDTL (97 aa).

This is an uncharacterized protein from Caenorhabditis elegans.